The following is a 514-amino-acid chain: Probable endopolygalacturonase D (514 aa).

The signal sequence occupies residues 1-16 (MKRCALLTPLLPLALA). The disordered stretch occupies residues 134–166 (IKSSSPGPSSSFAAAATTEAPTSTRASPYTPYT). A compositionally biased stretch (low complexity) spans 136-166 (SSSPGPSSSFAAAATTEAPTSTRASPYTPYT). A disulfide bond links cysteine 173 and cysteine 188. A glycan (N-linked (GlcNAc...) asparagine) is linked at asparagine 240. PbH1 repeat units lie at residues 280-302 (VYNS…DIEN), 303-341 (TESL…DIKS), 342-363 (STDL…AITS), 364-384 (GTNI…SIGS), 393-414 (VDGV…RIKT), 422-444 (VSNI…VVQQ), and 456-500 (SNGV…SITG). The disordered stretch occupies residues 312 to 335 (TLDNSAGDEPNDSSDGDPAAHNSD). Asparagine 322 carries N-linked (GlcNAc...) asparagine glycosylation. The Proton donor role is filled by aspartate 356. A disulfide bridge links cysteine 358 with cysteine 374. An N-linked (GlcNAc...) asparagine glycan is attached at asparagine 366. Histidine 378 is a catalytic residue. An N-linked (GlcNAc...) asparagine glycan is attached at asparagine 429. Cysteine 483 and cysteine 488 are disulfide-bonded. Asparagine 490 carries N-linked (GlcNAc...) asparagine glycosylation. An intrachain disulfide couples cysteine 506 to cysteine 513.

It belongs to the glycosyl hydrolase 28 family.

The protein resides in the secreted. It carries out the reaction (1,4-alpha-D-galacturonosyl)n+m + H2O = (1,4-alpha-D-galacturonosyl)n + (1,4-alpha-D-galacturonosyl)m.. Its function is as follows. Involved in maceration and soft-rotting of plant tissue. Hydrolyzes the 1,4-alpha glycosidic bonds of de-esterified pectate in the smooth region of the plant cell wall. The protein is Probable endopolygalacturonase D (pgaD) of Emericella nidulans (strain FGSC A4 / ATCC 38163 / CBS 112.46 / NRRL 194 / M139) (Aspergillus nidulans).